Reading from the N-terminus, the 389-residue chain is Acetyl-CoA decarbonylase/synthase complex subunit delta (389 aa).

This sequence belongs to the CdhD family. As to quaternary structure, heterodimer of delta and gamma chains. The ACDS complex is made up of alpha, epsilon, beta, gamma and delta chains with a probable stoichiometry of (alpha(2)epsilon(2))(4)-beta(8)-(gamma(1)delta(1))(8).

Its function is as follows. Part of a complex that catalyzes the reversible cleavage of acetyl-CoA, allowing autotrophic growth from CO(2). Probably maintains the overall quaternary structure of the ACDS complex. The sequence is that of Acetyl-CoA decarbonylase/synthase complex subunit delta from Methanothermobacter thermautotrophicus (strain ATCC 29096 / DSM 1053 / JCM 10044 / NBRC 100330 / Delta H) (Methanobacterium thermoautotrophicum).